The primary structure comprises 88 residues: UPF0297 protein RBAM_024500 (88 aa).

The protein belongs to the UPF0297 family.

This Bacillus velezensis (strain DSM 23117 / BGSC 10A6 / LMG 26770 / FZB42) (Bacillus amyloliquefaciens subsp. plantarum) protein is UPF0297 protein RBAM_024500.